Here is a 372-residue protein sequence, read N- to C-terminus: MLLFSLTAITAVLAVSAVPTPSNNKDGSTISELPENWDQTKDDNRSLFLNKSDKNDLEPYPLALSEEGNQDGYDQTVDQRFDSPQSNGELDNLIMRPELYGEPPAMEGLASAFDLQRRKRGSGTKVGGAGAATKVVTKSGSGKKNLKPEDQAALSPIDLMTQHEAQRRKRGSGTKVGGAAASAKTATKNSGGNKKNFRPISERRKRDSGLSAADVRALLNLWEAQERRKQEYANQFAADRYYGRVNPDEEQPEVDENGDLWYNEPVVIGPHDRDYPHHSYFSEQNRMALARGYPDLYQVGPNELAQRYEEARRKRQYANKMKRFMVAKKRSDNMMHQNNYRPRDDLYTLAELLRSAPRVQEQDIPVYRRLIL.

A signal peptide spans 1 to 17; it reads MLLFSLTAITAVLAVSA. Disordered stretches follow at residues 18 to 89 and 136 to 208; these read VPTP…SNGE and VTKS…KRDS. Polar residues predominate over residues 19-31; the sequence is PTPSNNKDGSTIS. Residues 38 to 57 are compositionally biased toward basic and acidic residues; sequence DQTKDDNRSLFLNKSDKNDL. Residues 72–89 show a composition bias toward polar residues; it reads GYDQTVDQRFDSPQSNGE. Positions 177 to 191 are enriched in low complexity; it reads GGAAASAKTATKNSG.

May be proteolytically processed to give rise to a number of active peptides. In terms of tissue distribution, detected in the brain and frontal ganglion and in the axons connecting to the corpus cardiacum and corpus allatum (at protein level). Detected in the brain-subesophageal ganglion (brain-SG) complex, fat body, midgut and ovary. Expression in the brain-SG complex is 2-3 times higher than in the other tissues.

It is found in the cytoplasm. It localises to the secreted. This is Putative neuropeptide precursor protein from Bombyx mori (Silk moth).